Reading from the N-terminus, the 454-residue chain is Glutamyl-tRNA(Gln) amidotransferase subunit A (454 aa).

Residues Lys56 and Ser131 each act as charge relay system in the active site. The active-site Acyl-ester intermediate is Ser155.

The protein belongs to the amidase family. GatA subfamily. Heterotrimer of A, B and C subunits.

The catalysed reaction is L-glutamyl-tRNA(Gln) + L-glutamine + ATP + H2O = L-glutaminyl-tRNA(Gln) + L-glutamate + ADP + phosphate + H(+). Its function is as follows. Allows the formation of correctly charged Gln-tRNA(Gln) through the transamidation of misacylated Glu-tRNA(Gln) in organisms which lack glutaminyl-tRNA synthetase. The reaction takes place in the presence of glutamine and ATP through an activated gamma-phospho-Glu-tRNA(Gln). In Campylobacter lari (strain RM2100 / D67 / ATCC BAA-1060), this protein is Glutamyl-tRNA(Gln) amidotransferase subunit A.